The following is a 127-amino-acid chain: Ribonuclease P protein component (127 aa).

Residues 99–127 (ALSASLRQQLRDGIDRSARRQEPAAERQR) form a disordered region. The segment covering 107–127 (QLRDGIDRSARRQEPAAERQR) has biased composition (basic and acidic residues).

The protein belongs to the RnpA family. As to quaternary structure, consists of a catalytic RNA component (M1 or rnpB) and a protein subunit.

The enzyme catalyses Endonucleolytic cleavage of RNA, removing 5'-extranucleotides from tRNA precursor.. Functionally, RNaseP catalyzes the removal of the 5'-leader sequence from pre-tRNA to produce the mature 5'-terminus. It can also cleave other RNA substrates such as 4.5S RNA. The protein component plays an auxiliary but essential role in vivo by binding to the 5'-leader sequence and broadening the substrate specificity of the ribozyme. This Mycobacteroides abscessus (strain ATCC 19977 / DSM 44196 / CCUG 20993 / CIP 104536 / JCM 13569 / NCTC 13031 / TMC 1543 / L948) (Mycobacterium abscessus) protein is Ribonuclease P protein component.